Consider the following 435-residue polypeptide: Beta-arrestin arr-1 (435 aa).

The disordered stretch occupies residues 358 to 382 (LTHSKPPESPERTDRGLPSIEATNG). Positions 362 to 372 (KPPESPERTDR) are enriched in basic and acidic residues. The short motif at 390–394 (LIQLH) is the Clathrin box element. The [DE]-X(1,2)-F-X-X-[FL]-X-X-X-R motif signature appears at 404–414 (DLIFEDFARMR). Residues 416-435 (HGNDSEDQPSPSANLPPSLL) are disordered. Residues 424–435 (PSPSANLPPSLL) show a composition bias toward low complexity.

Belongs to the arrestin family. As to quaternary structure, component of a complex composed of arr-1, daf-18 and mpz-1. Within the complex, interacts (via C-terminus) with mpz-1 (via PDZ domain) and phosphatase daf-18. May interact (via C-terminus) with clathrin chc-1 and beta-2 adaptin (AP2) apb-1. In terms of tissue distribution, expressed in head neurons, nerve ring and ventral nerve cord (at protein level). Expressed in the nervous system including the nerve ring and the ventral and dorsal nerve cords. Highly expressed in amphid chemosensory neurons AWA, AWB, AWC, ADL and ASH, and in hermaphrodite specific neuron HSN. Also expressed in the intestine.

It localises to the perikaryon. Its subcellular location is the cell projection. It is found in the dendrite. In terms of biological role, adapter protein required for olfactory adaptation and recovery to volatile odorants, probably by desensitization of G-protein coupled receptors (GPCR). May play a role in clathrin-mediated GPCR endocytosis. Acts as a positive regulator of insulin-like daf-2 signaling pathway probably by forming a complex with mpz-1 and phosphatase daf-18 likely resulting in daf-18 inhibition. Involved in egg-laying. The sequence is that of Beta-arrestin arr-1 from Caenorhabditis elegans.